Reading from the N-terminus, the 299-residue chain is Probable plastid-lipid-associated protein 13, chloroplastic (299 aa).

Residues 1–48 (MALIHGSVPGTSAVRLVFSTSASPSRFCLNVPVVKQGWKNSCRRRVLR) constitute a chloroplast transit peptide. Alanine 2 is modified (N-acetylvaline).

This sequence belongs to the PAP/fibrillin family.

Its subcellular location is the plastid. The protein resides in the chloroplast. The protein localises to the plastoglobule. The sequence is that of Probable plastid-lipid-associated protein 13, chloroplastic (PAP13) from Arabidopsis thaliana (Mouse-ear cress).